Here is a 1481-residue protein sequence, read N- to C-terminus: Cystic fibrosis transmembrane conductance regulator (1481 aa).

Residues 1-77 (MQRSPLEKAS…KLINALRRCF (77 aa)) are Cytoplasmic-facing. A helical transmembrane segment spans residues 78 to 98 (FWRFTFYGILLYLGEVTKAVQ). In terms of domain architecture, ABC transmembrane type-1 1 spans 81–365 (FTFYGILLYL…WAVQTWYDSL (285 aa)). Over 99–122 (PLLLGRIIASYDPDNKTERSIAIY) the chain is Extracellular. A helical membrane pass occupies residues 123–146 (LGIGLCLLFIVRTLLLHPAIFGLH). Topologically, residues 147–195 (HIGMQMRIAMFSLIYKKTLKLSSRVLDKISIGQLVSLLSNNLNKFDEGL) are cytoplasmic. Residues 196-216 (ALAHFVWIAPLQVALLMGLIW) form a helical membrane-spanning segment. The Extracellular segment spans residues 217 to 222 (ELLQAS). A helical membrane pass occupies residues 223 to 243 (AFCGLGFLIVLALFQAGLGRM). At 244 to 298 (MMKYRDQRAGKINERLVITSEMIENIQSVKAYCWEEAMEKMIENLRQTELKLTRK) the chain is on the cytoplasmic side. The helical transmembrane segment at 299-319 (AAYVRYFNSSAFFFSGFFVVF) threads the bilayer. Residues 320 to 339 (LSVLPYALIKGIILRKIFTT) lie on the Extracellular side of the membrane. The helical transmembrane segment at 340–358 (ISFCIVLRMAVTRQFPWAV) threads the bilayer. Residues 359–858 (QTWYDSLGAI…YLRYITLHKS (500 aa)) are Cytoplasmic-facing. Residues Trp-401, Ser-434, 458–465 (GSTGAGKT), and Gln-493 contribute to the ATP site. In terms of domain architecture, ABC transporter 1 spans 423 to 646 (NDDNNLFFSN…RPDFSSKLMG (224 aa)). Residue Cys-524 is the site of S-palmitoyl cysteine attachment. Phosphoserine is present on residues Ser-549 and Ser-660. The disordered R region stretch occupies residues 654–831 (SSERRNSILT…EEINEEDLKE (178 aa)). Position 670 is a phosphoserine; by PKA (Ser-670). The residue at position 686 (Ser-686) is a Phosphoserine. Residue Lys-688 forms a Glycyl lysine isopeptide (Lys-Gly) (interchain with G-Cter in ubiquitin) linkage. 2 positions are modified to phosphoserine: Ser-700 and Ser-712. Thr-717 is modified (phosphothreonine). Phosphoserine is present on residues Ser-737, Ser-753, Ser-768, Ser-790, Ser-795, and Ser-813. The chain crosses the membrane as a helical span at residues 859–879 (LIFVLIWCLVIFLAEVAASLV). Residues 859-1155 (LIFVLIWCLV…AVNSSIDVDS (297 aa)) enclose the ABC transmembrane type-1 2 domain. Residues 880-918 (VLWLLRNTPFQDKGNSTYSRNNSYAVIITNTSSYYVFYI) lie on the Extracellular side of the membrane. 3 N-linked (GlcNAc...) asparagine glycosylation sites follow: Asn-894, Asn-900, and Asn-909. Residues 919 to 939 (YVGVADTLLALGFFRGLPLVH) traverse the membrane as a discontinuously helical segment. The Cytoplasmic portion of the chain corresponds to 940–990 (TLITVSKILHHKMLHSVLQAPMSTLNTLKAGGILNRFSKDIAILDDLLPLT). A helical membrane pass occupies residues 991-1011 (IFDFIQLLLIVIGAIAVVSVL). Over 1012-1013 (QP) the chain is Extracellular. A helical membrane pass occupies residues 1014–1034 (YIFLATVPVIAAFVLLRAYFL). Over 1035–1095 (QTSQQLKQLE…TANWFLYLST (61 aa)) the chain is Cytoplasmic. The chain crosses the membrane as a helical span at residues 1096 to 1116 (LRWFQMRIEMIFVIFFIAVTF). Topologically, residues 1117–1130 (ISILTTGEGEGTVG) are extracellular. Residues 1131 to 1151 (IILTLAMNIMSTLQWAVNSSI) traverse the membrane as a helical segment. The Cytoplasmic portion of the chain corresponds to 1152 to 1481 (DVDSLMRSVS…TEEEVQETRL (330 aa)). The ABC transporter 2 domain occupies 1211 to 1444 (MTIKDLTAKY…KSLFRQAISH (234 aa)). Residues Tyr-1220 and 1245-1252 (GRTGSGKS) each bind ATP. The tract at residues 1387–1481 (RALKQAFADC…TEEEVQETRL (95 aa)) is interaction with GORASP2. A lipid anchor (S-palmitoyl cysteine) is attached at Cys-1396. Residues Ser-1445 and Ser-1457 each carry the phosphoserine modification. The segment at 1453–1481 (HRNSSKYKSRPQIASLKEETEEEVQETRL) is disordered. Acidic residues predominate over residues 1471–1481 (ETEEEVQETRL). The PDZ-binding motif lies at 1479–1481 (TRL).

It belongs to the ABC transporter superfamily. ABCC family. CFTR transporter (TC 3.A.1.202) subfamily. In terms of assembly, monomer; does not require oligomerization for channel activity. May form oligomers in the membrane. Interacts with SLC26A3, SLC26A6 and NHERF1. Interacts with SHANK2. Interacts with MYO6. Interacts (via C-terminus) with GOPC (via PDZ domain); this promotes CFTR internalization and thereby decreases channel activity. Interacts with SLC4A7 through NHERF1. Found in a complex with MYO5B and RAB11A. Interacts with ANO1. Interacts with SLC26A8. Interacts with AHCYL1; the interaction increases CFTR activity. Interacts with CSE1L. The core-glycosylated form interacts with GORASP2 (via PDZ GRASP-type 1 domain) in respone to ER stress. Interacts with MARCHF2; the interaction leads to CFTR ubiqtuitination and degradation. Interacts with ADGRG2. N-glycosylated. In terms of processing, phosphorylated; cAMP treatment promotes phosphorylation and activates the channel. Dephosphorylation decreases the ATPase activity (in vitro). Phosphorylation at PKA sites activates the channel. Phosphorylation at PKC sites enhances the response to phosphorylation by PKA. Phosphorylated by AMPK; this inhibits channel activity. Post-translationally, ubiquitinated, leading to its degradation in the lysosome. Deubiquitination by USP10 in early endosomes enhances its endocytic recycling to the cell membrane. Ubiquitinated by RNF185 during ER stress. Ubiquitinated by MARCHF2.

The protein localises to the apical cell membrane. It localises to the early endosome membrane. It is found in the cell membrane. Its subcellular location is the recycling endosome membrane. The protein resides in the endoplasmic reticulum membrane. The protein localises to the nucleus. The enzyme catalyses ATP + H2O + closed Cl(-) channel = ADP + phosphate + open Cl(-) channel.. It carries out the reaction chloride(in) = chloride(out). It catalyses the reaction hydrogencarbonate(in) = hydrogencarbonate(out). The catalysed reaction is ATP + H2O = ADP + phosphate + H(+). Functionally, epithelial ion channel that plays an important role in the regulation of epithelial ion and water transport and fluid homeostasis. Mediates the transport of chloride ions across the cell membrane. Possesses an intrinsic ATPase activity and utilizes ATP to gate its channel; the passive flow of anions through the channel is gated by cycles of ATP binding and hydrolysis by the ATP-binding domains. The ion channel is also permeable to HCO(3)(-); selectivity depends on the extracellular chloride concentration. Exerts its function also by modulating the activity of other ion channels and transporters. Contributes to the regulation of the pH and the ion content of the epithelial fluid layer. Modulates the activity of the epithelial sodium channel (ENaC) complex, in part by regulating the cell surface expression of the ENaC complex. May regulate bicarbonate secretion and salvage in epithelial cells by regulating the transporter SLC4A7. Can inhibit the chloride channel activity of ANO1. Plays a role in the chloride and bicarbonate homeostasis during sperm epididymal maturation and capacitation. The protein is Cystic fibrosis transmembrane conductance regulator of Callithrix jacchus (White-tufted-ear marmoset).